The following is a 236-amino-acid chain: Peroxisomal membrane protein 11D (236 aa).

The residue at position 2 (G2) is an N-acetylglycine. The Cytoplasmic portion of the chain corresponds to 2–92 (GTTLDVSRAE…LPLVLLGKSK (91 aa)). A helical transmembrane segment spans residues 93–109 (NALLSTFLFLDQIVWLG). Topologically, residues 110-207 (RSGIYKNKER…LLQLAPTKIT (98 aa)) are lumenal. A helical transmembrane segment spans residues 208-227 (PRVTGAFGFITSIISCYQLL). The Cytoplasmic portion of the chain corresponds to 228 to 236 (PTRPKIKTP).

It belongs to the peroxin-11 family. As to quaternary structure, homooligomer. Interacts with ARC5 and FIS1B on peroxisomes. In terms of tissue distribution, expressed in developing siliques.

It is found in the peroxisome membrane. Involved in peroxisomal proliferation. Promotes peroxisomal duplication, aggregation or elongation without fission. In Arabidopsis thaliana (Mouse-ear cress), this protein is Peroxisomal membrane protein 11D (PEX11D).